Here is a 337-residue protein sequence, read N- to C-terminus: tRNA N6-adenosine threonylcarbamoyltransferase (337 aa).

The Fe cation site is built by His-114 and His-118. Substrate is bound by residues 136–140 (LVSGG), Asp-169, Gly-182, Asp-186, and Asn-275. Position 301 (Asp-301) interacts with Fe cation.

Belongs to the KAE1 / TsaD family. The cofactor is Fe(2+).

It is found in the cytoplasm. It carries out the reaction L-threonylcarbamoyladenylate + adenosine(37) in tRNA = N(6)-L-threonylcarbamoyladenosine(37) in tRNA + AMP + H(+). Functionally, required for the formation of a threonylcarbamoyl group on adenosine at position 37 (t(6)A37) in tRNAs that read codons beginning with adenine. Is involved in the transfer of the threonylcarbamoyl moiety of threonylcarbamoyl-AMP (TC-AMP) to the N6 group of A37, together with TsaE and TsaB. TsaD likely plays a direct catalytic role in this reaction. The protein is tRNA N6-adenosine threonylcarbamoyltransferase of Streptococcus uberis (strain ATCC BAA-854 / 0140J).